We begin with the raw amino-acid sequence, 107 residues long: Anaphase-promoting complex subunit 14 (107 aa).

The APC/C is composed of at least 13 subunits: apc1, apc2, nuc2, apc4, apc5, cut9, apc8, apc10, apc11, hcn1, apc13, apc14 and apc15.

It localises to the ascus epiplasm. Component of the anaphase promoting complex/cyclosome (APC/C), a cell cycle-regulated E3 ubiquitin-protein ligase complex that controls progression through mitosis and the G1 phase of the cell cycle. The APC/C is thought to confer substrate specificity and, in the presence of ubiquitin-conjugating E2 enzymes, it catalyzes the formation of protein-ubiquitin conjugates that are subsequently degraded by the 26S proteasome. Appears to play a role in spore wall formation. The protein is Anaphase-promoting complex subunit 14 of Schizosaccharomyces pombe (strain 972 / ATCC 24843) (Fission yeast).